The primary structure comprises 243 residues: tRNA (guanine-N(1)-)-methyltransferase (243 aa).

S-adenosyl-L-methionine contacts are provided by residues Gly-113 and 133-138 (IGDFVL).

Belongs to the RNA methyltransferase TrmD family. In terms of assembly, homodimer.

The protein resides in the cytoplasm. It carries out the reaction guanosine(37) in tRNA + S-adenosyl-L-methionine = N(1)-methylguanosine(37) in tRNA + S-adenosyl-L-homocysteine + H(+). Specifically methylates guanosine-37 in various tRNAs. The chain is tRNA (guanine-N(1)-)-methyltransferase from Bacillus velezensis (strain DSM 23117 / BGSC 10A6 / LMG 26770 / FZB42) (Bacillus amyloliquefaciens subsp. plantarum).